The primary structure comprises 584 residues: Arginine--tRNA ligase (584 aa).

The short motif at 126–136 (PNIAKEMHVGH) is the 'HIGH' region element.

The protein belongs to the class-I aminoacyl-tRNA synthetase family. In terms of assembly, monomer.

The protein localises to the cytoplasm. It catalyses the reaction tRNA(Arg) + L-arginine + ATP = L-arginyl-tRNA(Arg) + AMP + diphosphate. In Synechococcus sp. (strain ATCC 27144 / PCC 6301 / SAUG 1402/1) (Anacystis nidulans), this protein is Arginine--tRNA ligase.